The sequence spans 115 residues: SPbeta prophage-derived uncharacterized membrane protein YosE (115 aa).

3 helical membrane passes run 20–42 (IVVG…YGLN), 58–78 (VHVT…FVKG), and 95–115 (GKSL…TLFI).

The protein localises to the cell membrane. This chain is SPbeta prophage-derived uncharacterized membrane protein YosE (yosE), found in Bacillus subtilis (strain 168).